The sequence spans 109 residues: Small ribosomal subunit protein bS6 (109 aa).

This sequence belongs to the bacterial ribosomal protein bS6 family.

Its function is as follows. Binds together with bS18 to 16S ribosomal RNA. This is Small ribosomal subunit protein bS6 from Ehrlichia chaffeensis (strain ATCC CRL-10679 / Arkansas).